A 447-amino-acid chain; its full sequence is Tubulin beta-5 chain (447 aa).

GTP-binding residues include Q11, E69, S138, G142, T143, G144, N204, and N226. E69 serves as a coordination point for Mg(2+).

This sequence belongs to the tubulin family. In terms of assembly, dimer of alpha and beta chains. A typical microtubule is a hollow water-filled tube with an outer diameter of 25 nm and an inner diameter of 15 nM. Alpha-beta heterodimers associate head-to-tail to form protofilaments running lengthwise along the microtubule wall with the beta-tubulin subunit facing the microtubule plus end conferring a structural polarity. Microtubules usually have 13 protofilaments but different protofilament numbers can be found in some organisms and specialized cells. The cofactor is Mg(2+).

It localises to the cytoplasm. The protein resides in the cytoskeleton. Functionally, tubulin is the major constituent of microtubules, a cylinder consisting of laterally associated linear protofilaments composed of alpha- and beta-tubulin heterodimers. Microtubules grow by the addition of GTP-tubulin dimers to the microtubule end, where a stabilizing cap forms. Below the cap, tubulin dimers are in GDP-bound state, owing to GTPase activity of alpha-tubulin. In Triticum aestivum (Wheat), this protein is Tubulin beta-5 chain (TUBB5).